A 298-amino-acid polypeptide reads, in one-letter code: MPSLKEVQLKIKGVKQTKKITKAMNMVATSKLRGAQTNMEAFRPYAEKFAEVLGSLAAKAGEETSPLLVPKESVKRVNVVLCTSDRGLCGGFNTNLVRMANAYLKRCQEKEIEVSFTHFGKKGRDWCRKMTDCERKSEYLGVVGARFGFNVAVTAGRELINGFLNGDYDEVHVIYSEFQGMAKQLPVIRQLLPIPPIETADSPASDGGEDYLAEHICEPSPDEILDAMLPKNVFIQIYSALLETSTSEHAARMAAMDNASKACNDMINELTLLYNKARQAAITAELMDIVGGAEALKG.

The protein belongs to the ATPase gamma chain family. F-type ATPases have 2 components, CF(1) - the catalytic core - and CF(0) - the membrane proton channel. CF(1) has five subunits: alpha(3), beta(3), gamma(1), delta(1), epsilon(1). CF(0) has three main subunits: a, b and c.

It is found in the cell inner membrane. In terms of biological role, produces ATP from ADP in the presence of a proton gradient across the membrane. The gamma chain is believed to be important in regulating ATPase activity and the flow of protons through the CF(0) complex. This chain is ATP synthase gamma chain, found in Desulfosudis oleivorans (strain DSM 6200 / JCM 39069 / Hxd3) (Desulfococcus oleovorans).